The sequence spans 151 residues: Ubiquitin-conjugating enzyme E2 2 (151 aa).

The segment at 1–26 is disordered; sequence MSTSARRRLMRDFKRMQTDPPAGVSA. A UBC core domain is found at 4 to 150; that stretch reads SARRRLMRDF…VRETVEKSWE (147 aa). Catalysis depends on cysteine 88, which acts as the Glycyl thioester intermediate.

Belongs to the ubiquitin-conjugating enzyme family.

Its subcellular location is the cytoplasm. It localises to the nucleus. It catalyses the reaction S-ubiquitinyl-[E1 ubiquitin-activating enzyme]-L-cysteine + [E2 ubiquitin-conjugating enzyme]-L-cysteine = [E1 ubiquitin-activating enzyme]-L-cysteine + S-ubiquitinyl-[E2 ubiquitin-conjugating enzyme]-L-cysteine.. Its pathway is protein modification; protein ubiquitination. In terms of biological role, catalyzes the covalent attachment of ubiquitin to other proteins. Plays a role in transcription regulation by catalyzing the monoubiquitination of histone H2B to form H2BK123ub1. H2BK123ub1 gives a specific tag for epigenetic transcriptional activation and is also a prerequisite for H3K4me and H3K79me formation. Also involved in postreplication repair of UV-damaged DNA, in N-end rule-dependent protein degradation and in sporulation. The sequence is that of Ubiquitin-conjugating enzyme E2 2 (uvsJ) from Emericella nidulans (strain FGSC A4 / ATCC 38163 / CBS 112.46 / NRRL 194 / M139) (Aspergillus nidulans).